The primary structure comprises 258 residues: UPF0246 protein YaaA (258 aa).

It belongs to the UPF0246 family.

This Escherichia coli (strain 55989 / EAEC) protein is UPF0246 protein YaaA.